We begin with the raw amino-acid sequence, 126 residues long: Small ribosomal subunit protein bS6 (126 aa).

The interval 99-126 (PLPAPRVVPGTEAPEPAQAAETPEPEAS) is disordered. The segment covering 107–120 (PGTEAPEPAQAAET) has biased composition (low complexity).

This sequence belongs to the bacterial ribosomal protein bS6 family.

Functionally, binds together with bS18 to 16S ribosomal RNA. The protein is Small ribosomal subunit protein bS6 of Synechococcus sp. (strain CC9902).